A 260-amino-acid chain; its full sequence is Deoxycytidine kinase (260 aa).

Phosphoserine; by CK1 occurs at positions 11 and 15. An ATP-binding site is contributed by 28–36 (GNIAAGKST). Glu-53 lines the substrate pocket. Thr-72 bears the Phosphothreonine; by CK1 mark. Position 74 is a phosphoserine (Ser-74). Residues Tyr-86 and Gln-97 each coordinate substrate. Catalysis depends on Glu-127, which acts as the Proton acceptor. The substrate site is built by Arg-128 and Asp-133. 188–192 (RIYLR) provides a ligand contact to ATP. Glu-197 contributes to the substrate binding site. Position 240–242 (240–242 (EDF)) interacts with ATP.

The protein belongs to the DCK/DGK family. In terms of assembly, homodimer. Post-translationally, phosphorylated and activated in vitro upon phosphorylation at Ser-74 by CSNK1D/CK1.

Its subcellular location is the nucleus. The enzyme catalyses 2'-deoxycytidine + a ribonucleoside 5'-triphosphate = dCMP + a ribonucleoside 5'-diphosphate + H(+). The catalysed reaction is 2'-deoxyadenosine + ATP = dAMP + ADP + H(+). It carries out the reaction 2'-deoxyguanosine + ATP = dGMP + ADP + H(+). Functionally, phosphorylates the deoxyribonucleosides deoxycytidine, deoxyguanosine and deoxyadenosine. Has broad substrate specificity, and does not display selectivity based on the chirality of the substrate. It is also an essential enzyme for the phosphorylation of numerous nucleoside analogs widely employed as antiviral and chemotherapeutic agents. The polypeptide is Deoxycytidine kinase (DCK) (Homo sapiens (Human)).